The chain runs to 873 residues: Potassium voltage-gated channel subfamily KQT member 3 (873 aa).

The disordered stretch occupies residues 1–41 (MGLKARRAAGAAGGGGGEGGGGGGGAANPAGGDSAVAGDEE). Residues 1 to 121 (MGLKARRAAG…IYDALERPRG (121 aa)) lie on the Cytoplasmic side of the membrane. Positions 11–26 (AAGGGGGEGGGGGGGA) are enriched in gly residues. Phosphothreonine is present on threonine 82. A helical membrane pass occupies residues 122–144 (WALLYHALVFLIVLGCLILAVLT). Over 145–154 (TFKEYETVSG) the chain is Extracellular. Residues 155–176 (DWLLLLETFAIFIFGAEFALRI) traverse the membrane as a helical segment. Residues 177–194 (WAAGCCCRYKGWRGRLKF) lie on the Cytoplasmic side of the membrane. Residues 195 to 214 (ARKPLCMLDIFVLIASVPVV) form a helical membrane-spanning segment. The Extracellular portion of the chain corresponds to 215-226 (AVGNQGNVLATS). The helical; Voltage-sensor transmembrane segment at 227 to 245 (LRSLRFLQILRMLRMDRRG) threads the bilayer. Residue arginine 244 participates in a 1,2-diacyl-sn-glycero-3-phospho-(1D-myo-inositol-4,5-bisphosphate) binding. Residues 246–257 (GTWKLLGSAICA) are Cytoplasmic-facing. The helical transmembrane segment at 258–283 (HSKELITAWYIGFLTLILSSFLVYLV) threads the bilayer. Residue lysine 260 coordinates a 1,2-diacyl-sn-glycero-3-phospho-(1D-myo-inositol-4,5-bisphosphate). Topologically, residues 284–303 (EKDVPEMDAQGEEMKEEFET) are extracellular. Residues 304–316 (YADALWWGLITLA) constitute an intramembrane region (pore-forming). A Selectivity filter motif is present at residues 317–322 (TIGYGD). Over 317 to 327 (TIGYGDKTPKT) the chain is Extracellular. Residues 328-354 (WEGRLIAATFSLIGVSFFALPAGILGS) traverse the membrane as a helical segment. The Cytoplasmic portion of the chain corresponds to 355 to 873 (GLALKVQEQH…SIWTPSNKPT (519 aa)). The interval 357 to 538 (ALKVQEQHRQ…RLYKKKFKET (182 aa)) is mediates interaction with calmodulin. Lysine 367 lines the a 1,2-diacyl-sn-glycero-3-phospho-(1D-myo-inositol-4,5-bisphosphate) pocket. Disordered stretches follow at residues 575-603 (PGPPSTPKHKKSQKGSAFTYPSQQSPRNE), 723-742 (RGGPSSTKAQANLPSSGSTY), and 766-873 (ELQG…NKPT). Polar residues-rich tracts occupy residues 588-601 (KGSAFTYPSQQSPR), 725-741 (GPSSTKAQANLPSSGST), and 844-873 (DPFTPSGSMPMSSTGDGISDSIWTPSNKPT).

Belongs to the potassium channel family. KQT (TC 1.A.1.15) subfamily. Kv7.3/KCNQ3 sub-subfamily. Heterotetramer with KCNQ2; forms heterotetrameric native M-channel responsible for the M-current. Interacts with calmodulin; the interaction is calcium-independent, constitutive and participates in the proper assembly of a functional M-channel. Heteromultimer with KCNQ5. May associate with KCNE2. Interacts with IQCJ-SCHIP1. Interacts (via the pore module) with SLC5A3/SMIT1; forms a coregulatory complex that alters ion selectivity, voltage dependence and gating kinetics of the channel. Post-translationally, KCNQ2/KCNQ3 are ubiquitinated by NEDD4L. Ubiquitination leads to protein degradation. Degradation induced by NEDD4L is inhibited by USP36. As to expression, expressed in dorsal root ganglion (DRG) neurons.

It localises to the cell membrane. It carries out the reaction K(+)(in) = K(+)(out). The enzyme catalyses Rb(+)(in) = Rb(+)(out). It catalyses the reaction Cs(+)(in) = Cs(+)(out). The catalysed reaction is Na(+)(in) = Na(+)(out). Its activity is regulated as follows. Phosphatidylinositol-4,5-bisphosphate (PIP2) potentiates the activation of KCNQ channels by enhancing the electro-mechanical coupling of the voltage-sensing domain (VSD) and the pore-forming domain (PD). In the closed state of the channel, PIP2 is anchored at the S2-S3 loop; upon channel activation, PIP2 interacts with the S4-S5 linker and is involved in channel gating. Calcium suppresses KCNQ2-KCNQ3 channel currents, with calcium-bound calmodulin inducing a change in channel configuration which leads to the reduction of channel affinity for PIP2 and subsequent current suppression. In terms of biological role, pore-forming subunit of the voltage-gated potassium (Kv) M-channel which is responsible for the M-current, a key controller of neuronal excitability. M-channel is composed of pore-forming subunits KCNQ2 and KCNQ3 assembled as heterotetramers. The native M-current has a slowly activating and deactivating potassium conductance which plays a critical role in determining the subthreshold electrical excitability of neurons as well as the responsiveness to synaptic inputs. M-channel is selectively permeable in vitro to other cations besides potassium, in decreasing order of affinity K(+) &gt; Rb(+) &gt; Cs(+) &gt; Na(+). M-channel association with SLC5A3/SMIT1 alters channel ion selectivity, increasing Na(+) and Cs(+) permeation relative to K(+). Suppressed by activation of M1 muscarinic acetylcholine receptors. KCNQ3 also associates with KCNQ5 to form a functional channel in vitro and may also contribute to the M-current in brain. The polypeptide is Potassium voltage-gated channel subfamily KQT member 3 (Mus musculus (Mouse)).